The following is a 977-amino-acid chain: Poly [ADP-ribose] polymerase 1 (977 aa).

PARP-type zinc fingers lie at residues 8–91 and 104–179; these read WKAE…GSAP and CTIE…KKDA. Positions 20, 23, 52, 55, 116, 119, 141, and 144 each coordinate Zn(2+). Disordered stretches follow at residues 177–199 and 218–237; these read KDAP…QNDI and DKGK…DLQE. One can recognise a PADR1 zinc-binding domain in the interval 227-365; it reads DSNANSSDLQ…AKKPERVLPP (139 aa). The region spanning 254–288 is the SAP domain; that stretch reads KKHVSTAELRNMLEANGQDTSGPERHLLDRCADGM. The zinc ribbon stretch occupies residues 291 to 335; sequence GALGTCPVCSSFLYYHGGQYHCSGYVSEWSKCTYSTTEPVRSKKK. Zn(2+) contacts are provided by cysteine 296, cysteine 299, cysteine 312, and cysteine 322. The BRCT domain occupies 381-473; it reads SFLSEGLDKL…RVLPFDLYKV (93 aa). Residues 504–604 form the WGR domain; that stretch reads TGHILEDGKS…TNFQKQPGKF (101 aa). Positions 626 to 745 constitute a PARP alpha-helical domain; it reads KSSLPPQLLE…DIEIASKLVG (120 aa). The PARP catalytic domain occupies 752–977; the sequence is ESLDDKYKKL…LLKVRFHHKR (226 aa).

Belongs to the ARTD/PARP family.

It localises to the nucleus. It carries out the reaction NAD(+) + (ADP-D-ribosyl)n-acceptor = nicotinamide + (ADP-D-ribosyl)n+1-acceptor + H(+).. The enzyme catalyses L-aspartyl-[protein] + NAD(+) = 4-O-(ADP-D-ribosyl)-L-aspartyl-[protein] + nicotinamide. The catalysed reaction is L-glutamyl-[protein] + NAD(+) = 5-O-(ADP-D-ribosyl)-L-glutamyl-[protein] + nicotinamide. Its function is as follows. Involved in the base excision repair (BER) pathway, by catalyzing the poly(ADP-ribosyl)ation of a limited number of acceptor proteins involved in chromatin architecture and in DNA metabolism. This modification follows DNA damages and appears as an obligatory step in a detection/signaling pathway leading to the reparation of DNA strand breaks. The polypeptide is Poly [ADP-ribose] polymerase 1 (PARP1) (Oryza sativa subsp. japonica (Rice)).